The chain runs to 74 residues: MYTNSDFVVIKALEDGVNVIGLTRGADTRFHHSEKLDKGEVLIAQFTEHTSAIKVRGKAYIQTRHGVIESEGKK.

It belongs to the MtrB family. As to quaternary structure, oligomer of 11 identical subunits arranged in doughnut-like structure.

In terms of biological role, required for transcription attenuation control in the Trp operon. This trans-acting factor seems to recognize a 10 bases nucleotide sequence in the Trp leader transcript causing transcription termination. Binds the leader RNA only in presence of L-tryptophan. The sequence is that of Transcription attenuation protein MtrB (mtrB) from Geobacillus stearothermophilus (Bacillus stearothermophilus).